The primary structure comprises 343 residues: MKALAKLERAPGLTLTDVKKPEVGHNDVMIRITRTAICGTDIHIWKWDDWAQKTIPVPMHVGHEYVGEIVEMGQEVRGFAIGDRVSGEGHITCGFCRNCRAGRRHLCRNTVGVGVNREGAFAEYLVIPAFNAFKIPPEISDDLAAIFDPFGNATHTALSFNLVGEDVLITGAGPIGIMAVAIAKHVGARNVVITDVNDYRLELARKMGATRAVNVSRESLRDVMADLHMTEGFDVGLEMSGVPSAFTSMLEAMNHGGKIALLGIPPAQTAIDWTQVIFKGLEIKGIYGREMFETWYKMVAMLQSGLDLSPILTHHFKVDDYQEAFATMLSGESGKVILDWTAA.

Residue C38 coordinates Zn(2+). Residues T40 and H43 each act as charge relay system in the active site. The Zn(2+) site is built by H63, E64, C93, C96, C99, and C107. Residues I175, D195, R200, 262–264 (LGI), and 286–287 (IY) each bind NAD(+).

It belongs to the zinc-containing alcohol dehydrogenase family. As to quaternary structure, homotetramer. Zn(2+) is required as a cofactor.

It is found in the cytoplasm. It catalyses the reaction L-threonine + NAD(+) = (2S)-2-amino-3-oxobutanoate + NADH + H(+). It participates in amino-acid degradation; L-threonine degradation via oxydo-reductase pathway; glycine from L-threonine: step 1/2. In terms of biological role, catalyzes the NAD(+)-dependent oxidation of L-threonine to 2-amino-3-ketobutyrate. The polypeptide is L-threonine 3-dehydrogenase (Paraburkholderia phytofirmans (strain DSM 17436 / LMG 22146 / PsJN) (Burkholderia phytofirmans)).